The following is a 293-amino-acid chain: Ubiquinone biosynthesis protein COQ9-B, mitochondrial (293 aa).

A disordered region spans residues 21–73 (LRSDDQKQPPFSSSSTHAETPEHAEEQYQQQQSPPRYTDQAGEESEDYESEEQ). Residues 29-38 (PPFSSSSTHA) show a composition bias toward polar residues. Residues 61–72 (AGEESEDYESEE) show a composition bias toward acidic residues. An a 1,2-diacylglycero-3-phosphoethanolamine-binding site is contributed by Arg219.

It belongs to the COQ9 family. In terms of assembly, homodimer. Heterodimer; two heterodimers of COQ7:COQ9 come together on the same side of the lipid pseudo-bilayer and form a curved tetramer with a hydrophobic surface suitable for membrane interaction. These two tetramers assemble into a soluble octamer with a pseudo-bilayer of lipids captured within. Interacts with COQ7; this interaction allows ubiquinone (CoQ) isoprene intermediates presentation to COQ7 and facilitates the COQ7-mediated hydroxylase step.

It localises to the mitochondrion. The protein operates within cofactor biosynthesis; ubiquinone biosynthesis. Its function is as follows. Membrane-associated protein that warps the membrane surface to access and bind aromatic isoprenes with high specificity, including ubiquinone (CoQ) isoprene intermediates and presents them directly to COQ7, therefore facilitating the COQ7-mediated hydroxylase step. Participates in the biosynthesis of coenzyme Q, also named ubiquinone, an essential lipid-soluble electron transporter for aerobic cellular respiration. This Xenopus laevis (African clawed frog) protein is Ubiquinone biosynthesis protein COQ9-B, mitochondrial (coq9-b).